Here is a 498-residue protein sequence, read N- to C-terminus: Meiosis-specific nuclear structural protein 1 (498 aa).

3 coiled-coil regions span residues 45-211 (KSEE…FLKE), 270-348 (LAFA…QRLE), and 385-450 (DDRI…RQKI).

The protein belongs to the MNS1 family.

It is found in the nucleus. The protein localises to the cytoplasm. The protein resides in the cytoskeleton. It localises to the cilium axoneme. Its subcellular location is the flagellum axoneme. Microtubule inner protein (MIP) part of the dynein-decorated doublet microtubules (DMTs) in cilia axoneme, which is required for motile cilia beating. May play a role in the control of meiotic division and germ cell differentiation through regulation of pairing and recombination during meiosis. Required for sperm flagella assembly. May play a role in the assembly and function of the outer dynein arm-docking complex (ODA-DC). ODA-DC mediates outer dynein arms (ODA) binding onto the axonemal doublet microtubules. The sequence is that of Meiosis-specific nuclear structural protein 1 (mns1) from Xenopus tropicalis (Western clawed frog).